The chain runs to 706 residues: Lethal(3)malignant brain tumor-like protein 2 (706 aa).

The segment at 1–85 (MEKPRGVEET…GTPRSLDGSG (85 aa)) is disordered. S13 is modified (phosphoserine). Over residues 15-26 (PMEEEEEDDDLE) the composition is skewed to acidic residues. The segment covering 39–50 (SSAGSESSSYLE) has biased composition (low complexity). Residues 54 to 63 (EAEHEDREAG) show a composition bias toward basic and acidic residues. S68 bears the Phosphoserine mark. T77 is subject to Phosphothreonine. The segment at 82-117 (DGSGSEPAVCEMCGIVGTREAFFSKTKRFCSVSCSR) adopts an FCS-type zinc-finger fold. Positions 91, 94, 111, and 115 each coordinate Zn(2+). MBT repeat units follow at residues 180–284 (FDWG…LVPP), 292–392 (TDWK…IKLS), 398–501 (MAHH…LTPP), and 509–605 (FSWE…LQPP). Phosphoserine is present on S339. K406 is covalently cross-linked (Glycyl lysine isopeptide (Lys-Gly) (interchain with G-Cter in SUMO2)). Residues 606 to 669 (VATEPTTPLK…KAPSEPAPDE (64 aa)) form a disordered region. Residues 620–635 (TKKKKKQFGKKRKRIP) show a composition bias toward basic residues. Glycyl lysine isopeptide (Lys-Gly) (interchain with G-Cter in SUMO2) cross-links involve residues K648, K660, and K676. A disordered region spans residues 685 to 706 (ADKALSPELPVPVENIKQETDD). Position 690 is a phosphoserine (S690). Residue K701 forms a Glycyl lysine isopeptide (Lys-Gly) (interchain with G-Cter in SUMO1); alternate linkage. A Glycyl lysine isopeptide (Lys-Gly) (interchain with G-Cter in SUMO2); alternate cross-link involves residue K701.

As to quaternary structure, part of the E2F6.com-1 complex in G0 phase composed of E2F6, MGA, MAX, TFDP1, CBX3, BAT8, EUHMTASE1, RING1, RNF2, MBLR, BAT8 and YAF2.

Its subcellular location is the nucleus. Its function is as follows. Putative Polycomb group (PcG) protein. PcG proteins maintain the transcriptionally repressive state of genes, probably via a modification of chromatin, rendering it heritably changed in its expressibility. Its association with a chromatin-remodeling complex suggests that it may contribute to prevent expression of genes that trigger the cell into mitosis. Binds to monomethylated and dimethylated 'Lys-20' on histone H4. Binds histone H3 peptides that are monomethylated or dimethylated on 'Lys-4', 'Lys-9' or 'Lys-27'. The chain is Lethal(3)malignant brain tumor-like protein 2 (L3MBTL2) from Bos taurus (Bovine).